The primary structure comprises 596 residues: F-box/WD repeat-containing protein 8 (596 aa).

N-acetylmethionine is present on Met-1. The segment at 21 to 95 (QVLRRRRRLE…PDRDAAEPEP (75 aa)) is disordered. Over residues 29 to 43 (LEAGERRPRRPEAGA) the composition is skewed to basic and acidic residues. A compositionally biased stretch (low complexity) spans 44–64 (RGEPASGYLGLAQGLLEGAGR). The span at 71–91 (GRTDRKDVSSRSRSPPDRDAA) shows a compositional bias: basic and acidic residues. Residues Ser-82 and Ser-84 each carry the phosphoserine modification. The 47-residue stretch at 111-157 (PFFDVHLPYELAINIFQYLNRRELGLCAQVSKTWKVIAEDEVLWYRL) folds into the F-box domain. WD repeat units lie at residues 199–248 (AVSE…LESE), 257–297 (QPYV…FEHD), 298–338 (ARIQ…SEFE), 339–381 (VQKL…LHYV), 382–427 (YGQP…SKLG), 428–473 (NALG…SAHQ), 474–511 (LGVSAVQMDDWKIVSGGEEGLVSVWDYRMNQKLWEVHS), and 512–559 (RHPV…AYEF).

As to quaternary structure, component of the Cul7-RING(FBXW8) complex consisting of CUL7, RBX1, SKP1 and FBXW8; within the complex interacts with CUL7 and SKP1. Interacts with GLMN isoform 1. Interacts with OBSL1, CUL1, CUL2, CCT6B, PFDN5, CCT2, CCT3, CCT6A, CCT7, VBP1, CCDC8, ARF1, TRIP13, PDCD5 and GORASP1. Interacts with MAP4K1/HPK1 (when autophosphorylated). Associated component of the 3M complex. Interacts with POUF51 (when phosphorylated on 'Ser-347'). In terms of processing, phosphorylation at Ser-84 by mTORC2 promotes FBXW8 stabilization, allowing its translocation to the cytosol in response to insulin. In terms of tissue distribution, expressed in placenta and embryonic brain (at protein level).

The protein resides in the cytoplasm. It localises to the perinuclear region. It is found in the golgi apparatus. Its subcellular location is the cytosol. It functions in the pathway protein modification; protein ubiquitination. In terms of biological role, substrate-recognition component of the Cul7-RING(FBXW8) ubiquitin ligase complex, which mediates the ubiquitination and subsequent proteasomal degradation of target proteins. The Cul7-RING(FBXW8) complex mediates ubiquitination and consequent degradation of GORASP1, acting as a component of the ubiquitin ligase pathway that regulates Golgi morphogenesis and dendrite patterning in brain. Mediates ubiquitination and degradation of IRS1 in a mTOR-dependent manner: the Cul7-RING(FBXW8) complex recognizes and binds IRS1 previously phosphorylated by S6 kinase (RPS6KB1 or RPS6KB2). The Cul7-RING(FBXW8) complex also mediates ubiquitination of MAP4K1/HPK1: recognizes and binds autophosphorylated MAP4K1/HPK1, leading to its degradation, thereby affecting cell proliferation and differentiation. The Cul7-RING(FBXW8) complex also mediates ubiquitination of phosphorylated cyclin-D1 (CCND1). The Cul7-RING(FBXW8) complex is however not a major regulator of CCND1 stability during the G1/S transition. Associated component of the 3M complex, suggesting that it mediates some of 3M complex functions. In Rattus norvegicus (Rat), this protein is F-box/WD repeat-containing protein 8 (Fbxw8).